Reading from the N-terminus, the 367-residue chain is Leucine-rich repeat-containing protein 28 (367 aa).

9 LRR repeats span residues 16–36 (KHKN…ELLK), 42–63 (HLER…LAQK), 66–87 (NLVE…IGSL), 89–111 (KLQC…GGLR), 112–133 (ALRH…VGDL), 135–156 (ELQT…LHLC), 158–180 (SLQY…CQLP), 181–202 (SLNE…LGRS), and 204–226 (ELQY…LYNK).

This is Leucine-rich repeat-containing protein 28 (Lrrc28) from Mus musculus (Mouse).